The sequence spans 103 residues: Acyl-CoA-binding protein (103 aa).

Residues 18-103 (HQADFDEAAE…AKTMVEKYGI (86 aa)) form the ACB domain. An acyl-CoA contacts are provided by residues K30, 45–49 (YGFYK), K67, K71, and Y90.

The protein belongs to the ACBP family. Monomer.

The protein resides in the endoplasmic reticulum. Its subcellular location is the golgi apparatus. Functionally, binds medium- and long-chain acyl-CoA esters with very high affinity and may function as an intracellular carrier of acyl-CoA esters. It is also able to displace diazepam from the benzodiazepine (BZD) recognition site located on the GABA type A receptor. It is therefore possible that this protein also acts as a neuropeptide to modulate the action of the GABA receptor. This is Acyl-CoA-binding protein (DBI) from Anas platyrhynchos (Mallard).